Here is a 298-residue protein sequence, read N- to C-terminus: Cyanophycinase (298 aa).

Residues S155, E173, and H197 each act as charge relay system in the active site.

The protein belongs to the peptidase S51 family.

The catalysed reaction is [L-4-(L-arginin-2-N-yl)aspartate](n) + H2O = [L-4-(L-arginin-2-N-yl)aspartate](n-1) + L-4-(L-arginin-2-N-yl)aspartate. Functionally, exopeptidase that catalyzes the hydrolytic cleavage of multi-L-arginyl-poly-L-aspartic acid (cyanophycin; a water-insoluble reserve polymer) into aspartate-arginine dipeptides. This Nostoc sp. (strain PCC 7120 / SAG 25.82 / UTEX 2576) protein is Cyanophycinase (cphB).